Consider the following 254-residue polypeptide: 21S rRNA pseudouridine(2819) synthase (254 aa).

The active site involves D71.

It belongs to the pseudouridine synthase RluA family.

It localises to the mitochondrion. It catalyses the reaction uridine(2819) in 21S rRNA = pseudouridine(2819) in 21S rRNA. Its function is as follows. Pseudouridylate synthase responsible for the pseudouridine-2819 formation in mitochondrial 21S rRNA. May modulate the efficiency or the fidelity of the mitochondrial translation machinery. The chain is 21S rRNA pseudouridine(2819) synthase (PUS5) from Saccharomyces cerevisiae (strain ATCC 204508 / S288c) (Baker's yeast).